The primary structure comprises 877 residues: MADVKISEIAQELGYTSKEIIEKANEMGLEDIKSPNKKVSSEIAEAIYQYVQSGEILDVVKKIAKPKKESTAKKTTKKDEVKKEEKKTTTKKESKNPAKAVSEKKDEVKKEEKQPENPIKNEILEEKKEEIKLDEKLGSNLNLAKRRGLVIVKKKKEESNETQINNEEKISTQATQGLSLSMIFSNSDESLKRKKKEKKNHPVASKKENTTKMDLLGDKDFADISLEDDDMVVLPDFSIKENKPAQPTNKKQPNILKQSLNNSINPFGEGGIQRRSRKKPPKKVEKKESEAITSVSIPKEIRVYEFAEKLGKNTGEIISKLFMLGMMTTKNDFLDEDAIEILAAEFGVEINIIDEADEFDYVKDYDENQTEENLSQRAPVITIMGHVDHGKTSLLDYIRKSRIASGEAGGITQHVGAYMVEKNGRKITFIDTPGHEAFTAMRARGASITDIVIIVVAADDGVKPQTKEAINHAKAANVPIIIAINKMDKENANPDMVKTQLAEMEIMPVEWGGSHEFVPVSAKKGDGVEDLLEIVLLQADILELKANPKAHAKASIIESSVQKGRGPVATIIVQNGTLRVGNTVVAGEAYGKVRAMSDDQGKALKEIGPGECGVIIGLSEVADAGETLIAVDSDKQAREYANKRHEYNRQKELSKSTKVSIDELGAKIKEGNLKALPVILKADVQGSLEAIKASLEKLKNDEIKVNIIHSGVGGITQSDIELASASENSIVLGFNIRPTGEIKERAKDKGVEIKTYNVIYNLLDDVKALLGGMMSPIISEEQLGQAEIRQVINVPKLGQIAGCMVTEGTINRGAKIRLIRDGVVVFEGNVSSLKRFKDDVREVAKGYECGVGIEGCNDMRVGDYIESYKEVEEQVSL.

Positions 66–115 (PKKESTAKKTTKKDEVKKEEKKTTTKKESKNPAKAVSEKKDEVKKEEKQP) are enriched in basic and acidic residues. 3 disordered regions span residues 66–127 (PKKE…LEEK), 187–208 (SDES…SKKE), and 241–290 (ENKP…KESE). Positions 192-201 (KRKKKEKKNH) are enriched in basic residues. The span at 245–265 (AQPTNKKQPNILKQSLNNSIN) shows a compositional bias: polar residues. In terms of domain architecture, tr-type G spans 376-543 (QRAPVITIMG…IVLLQADILE (168 aa)). Positions 385 to 392 (GHVDHGKT) are G1. 385 to 392 (GHVDHGKT) is a binding site for GTP. A G2 region spans residues 410-414 (GITQH). The G3 stretch occupies residues 431–434 (DTPG). Residues 431 to 435 (DTPGH) and 485 to 488 (NKMD) contribute to the GTP site. The G4 stretch occupies residues 485 to 488 (NKMD). The G5 stretch occupies residues 521 to 523 (SAK).

This sequence belongs to the TRAFAC class translation factor GTPase superfamily. Classic translation factor GTPase family. IF-2 subfamily.

It is found in the cytoplasm. Its function is as follows. One of the essential components for the initiation of protein synthesis. Protects formylmethionyl-tRNA from spontaneous hydrolysis and promotes its binding to the 30S ribosomal subunits. Also involved in the hydrolysis of GTP during the formation of the 70S ribosomal complex. This is Translation initiation factor IF-2 from Campylobacter lari (strain RM2100 / D67 / ATCC BAA-1060).